The primary structure comprises 1003 residues: Glutamate receptor ionotropic, NMDA 3B (1003 aa).

An N-terminal signal peptide occupies residues 1-24; it reads MECVQTLWLSLALALARGSWVVRG. Over 25–574 the chain is Extracellular; sequence HPQPCGVPTR…PIGAFMWPLH (550 aa). Asn-69, Asn-212, Asn-344, Asn-451, and Asn-465 each carry an N-linked (GlcNAc...) asparagine glycan. 2 disulfides stabilise this stretch: Cys-439/Cys-475 and Cys-445/Cys-476. Residues Ser-531, Ser-533, and Arg-538 each coordinate glycine. Residues Ser-533 and Arg-538 each contribute to the D-serine site. A helical membrane pass occupies residues 575–594; that stretch reads WSMWVGVFAALHLTALFLTL. The Cytoplasmic segment spans residues 595-615; the sequence is YEWRSPYGLTPRGRNRGTVFS. The discontinuously helical intramembrane region spans 616–627; it reads YSSALNLCYAIL. Topologically, residues 628 to 641 are cytoplasmic; that stretch reads FGRTVSSKTPKCPT. A helical transmembrane segment spans residues 642-661; that stretch reads GRFLMNLWAIFCLLVLSSYT. Residues 662-832 are Extracellular-facing; sequence ANLAAVMVGD…TLQMGVYHLS (171 aa). Ser-701 contributes to the glycine binding site. D-serine contacts are provided by Ser-701, Ala-702, and Asp-745. Asp-745 lines the glycine pocket. N-linked (GlcNAc...) asparagine glycosylation occurs at Asn-786. The chain crosses the membrane as a helical span at residues 833–848; that stretch reads GLFVLLCLGLGSALLT. Residues 849–1003 are Cytoplasmic-facing; sequence SLGEHVFYRL…RLLHAAPAES (155 aa). The disordered stretch occupies residues 883-912; that stretch reads LNTGPPEGQQERAEQECSGPKEEQPAADGA. The segment covering 891–906 has biased composition (basic and acidic residues); it reads QQERAEQECSGPKEEQ. Residues 947–986 adopt a coiled-coil conformation; the sequence is SNGPGVQAELRELELRIEAARERLRSALLRRGELRAQLGD. Residues 952–985 form an involved in the trafficking and surface expression of NMDARs region; the sequence is VQAELRELELRIEAARERLRSALLRRGELRAQLG.

It belongs to the glutamate-gated ion channel (TC 1.A.10.1) family. NR3B/GRIN3B subfamily. Forms heterotetrameric channels that contain at least two GluN1 subunits and at least a combination of one GluN2 and one GluN3 subunits (in vitro). Forms heterotetrameric channels composed of two GluN1/zeta subunits (GRIN1), and two identical GluN3 subunits (GRIN3A or GRIN3B) (in vitro). Does not form functional homomeric channels. Expressed in the facial nucleus and the ambiguus nucleus of the brainstem, pons, medulla, spinal cord and cerebellum.

It is found in the cell membrane. The protein resides in the postsynaptic cell membrane. It carries out the reaction Ca(2+)(in) = Ca(2+)(out). The catalysed reaction is Na(+)(in) = Na(+)(out). In terms of biological role, component of a non-conventional N-methyl-D-aspartate (NMDA) receptors (NMDARs) that function as heterotetrameric, ligand-gated cation channels with low calcium permeability and low voltage-dependent block by Mg(2+). Forms glutamatergic receptor complexes with GluN1 and GluN2 subunits which are activated by glycine binding to the GluN1 and GluN3 subunits and L-glutamate binding to GluN2 subunits. Forms excitatory glycinergic receptor complexes with GluN1 alone which are activated by glycine binding to the GluN1 and GluN3 subunits. GluN3B subunit also binds D-serine and, in the absence of glycine, activates glycinergic receptor complexes, but with lower efficacy than glycine. Each GluN3 subunit confers differential attributes to channel properties, including activation, deactivation and desensitization kinetics, pH sensitivity, Ca2(+) permeability, and binding to allosteric modulators. The chain is Glutamate receptor ionotropic, NMDA 3B from Mus musculus (Mouse).